The chain runs to 466 residues: Ribulose bisphosphate carboxylase large chain (466 aa).

N6,N6,N6-trimethyllysine is present on K4. Substrate-binding residues include N113 and T163. K165 (proton acceptor) is an active-site residue. K167 serves as a coordination point for substrate. Mg(2+)-binding residues include K191, D193, and E194. K191 carries the post-translational modification N6-carboxylysine. Catalysis depends on H284, which acts as the Proton acceptor. R285, H317, and S369 together coordinate substrate.

It belongs to the RuBisCO large chain family. Type I subfamily. As to quaternary structure, heterohexadecamer of 8 large chains and 8 small chains; disulfide-linked. The disulfide link is formed within the large subunit homodimers. Mg(2+) is required as a cofactor. In terms of processing, the disulfide bond which can form in the large chain dimeric partners within the hexadecamer appears to be associated with oxidative stress and protein turnover.

It is found in the plastid. The protein resides in the chloroplast. The enzyme catalyses 2 (2R)-3-phosphoglycerate + 2 H(+) = D-ribulose 1,5-bisphosphate + CO2 + H2O. The catalysed reaction is D-ribulose 1,5-bisphosphate + O2 = 2-phosphoglycolate + (2R)-3-phosphoglycerate + 2 H(+). Functionally, ruBisCO catalyzes two reactions: the carboxylation of D-ribulose 1,5-bisphosphate, the primary event in carbon dioxide fixation, as well as the oxidative fragmentation of the pentose substrate in the photorespiration process. Both reactions occur simultaneously and in competition at the same active site. In Drimys winteri (Winter's bark), this protein is Ribulose bisphosphate carboxylase large chain.